The following is a 306-amino-acid chain: Dermonecrotic toxin LiSicTox-alphaIA1bi (306 aa).

The first 18 residues, 1-18 (MLPYIVLVLGCWSVLSQA), serve as a signal peptide directing secretion. Positions 19–26 (AQTDDEER) are excised as a propeptide. Residue histidine 38 is part of the active site. Mg(2+) is bound by residues glutamate 58 and aspartate 60. Residue histidine 74 is the Nucleophile of the active site. Disulfide bonds link cysteine 78-cysteine 84 and cysteine 80-cysteine 223. Aspartate 118 is a binding site for Mg(2+).

It belongs to the arthropod phospholipase D family. Class II subfamily. Class IIa sub-subfamily. Mg(2+) serves as cofactor. As to expression, expressed by the venom gland.

Its subcellular location is the secreted. It carries out the reaction an N-(acyl)-sphingosylphosphocholine = an N-(acyl)-sphingosyl-1,3-cyclic phosphate + choline. The catalysed reaction is an N-(acyl)-sphingosylphosphoethanolamine = an N-(acyl)-sphingosyl-1,3-cyclic phosphate + ethanolamine. The enzyme catalyses a 1-acyl-sn-glycero-3-phosphocholine = a 1-acyl-sn-glycero-2,3-cyclic phosphate + choline. It catalyses the reaction a 1-acyl-sn-glycero-3-phosphoethanolamine = a 1-acyl-sn-glycero-2,3-cyclic phosphate + ethanolamine. Its function is as follows. Dermonecrotic toxins cleave the phosphodiester linkage between the phosphate and headgroup of certain phospholipids (sphingolipid and lysolipid substrates), forming an alcohol (often choline) and a cyclic phosphate. This toxin acts on sphingomyelin (SM). The level of enzymatic activity is high according to Tambourgi and colleagues or low according to Felicori and colleagues. It may also act on ceramide phosphoethanolamine (CPE), lysophosphatidylcholine (LPC) and lysophosphatidylethanolamine (LPE), but not on lysophosphatidylserine (LPS), and lysophosphatidylglycerol (LPG). It acts by transphosphatidylation, releasing exclusively cyclic phosphate products as second products. It induces complement-dependent hemolysis, dermonecrosis, vascular permeability and platelet aggregation. Both C5a and the membrane attack complex may play a role in the induction of dermonecrosis. MMP-9 and MMP-2 produced by skin fibroblasts can also contribute to proteolytic tissue destruction. This Loxosceles intermedia (Brown spider) protein is Dermonecrotic toxin LiSicTox-alphaIA1bi.